Reading from the N-terminus, the 301-residue chain is Ribosomal RNA small subunit methyltransferase A (301 aa).

6 residues coordinate S-adenosyl-L-methionine: Asn29, Leu31, Gly56, Glu77, Asp102, and Asn127.

The protein belongs to the class I-like SAM-binding methyltransferase superfamily. rRNA adenine N(6)-methyltransferase family. RsmA subfamily.

The protein resides in the cytoplasm. The catalysed reaction is adenosine(1518)/adenosine(1519) in 16S rRNA + 4 S-adenosyl-L-methionine = N(6)-dimethyladenosine(1518)/N(6)-dimethyladenosine(1519) in 16S rRNA + 4 S-adenosyl-L-homocysteine + 4 H(+). Specifically dimethylates two adjacent adenosines (A1518 and A1519) in the loop of a conserved hairpin near the 3'-end of 16S rRNA in the 30S particle. May play a critical role in biogenesis of 30S subunits. The polypeptide is Ribosomal RNA small subunit methyltransferase A (Halothermothrix orenii (strain H 168 / OCM 544 / DSM 9562)).